The sequence spans 271 residues: Magnesium dechelatase SGR2, chloroplastic (271 aa).

The N-terminal 54 residues, 1 to 54 (MCSLATNLLLPSKMKPVFPEKLSTSSLCVTTRRSKMKNRSIVPVARLFGPAIFE), are a transit peptide targeting the chloroplast.

This sequence belongs to the staygreen family. In terms of assembly, interacts with the light harvesting complex II (LHCII). Interacts with the chlorophyll catabolic enzyme (CCE) RCCR.

Its subcellular location is the plastid. The protein resides in the chloroplast thylakoid membrane. The enzyme catalyses chlorophyll a + 2 H(+) = pheophytin a + Mg(2+). Its function is as follows. Magnesium chelatase involved in chlorophyll a degradation in the chlorophyll-protein complexes of photosystem I (PSI) and photosystem II (PSII). Contributes to the degradation of PSI and PSII in the thylakoid membranes. Required to trigger chlorophyll degradation during natural and dark-induced leaf senescence. Mediates chlorophyll degradation during embryo degreening. Recombinant SGR2 possesses high dechelating activity against chlorophyll a, very low activity against chlorophyllide a, and no activity against chlorophyll b. This is Magnesium dechelatase SGR2, chloroplastic from Arabidopsis thaliana (Mouse-ear cress).